A 332-amino-acid chain; its full sequence is Glycerol-3-phosphate dehydrogenase [NAD(P)+] (332 aa).

5 residues coordinate NADPH: Ser11, Trp12, Arg32, Arg33, and Lys106. Positions 106 and 136 each coordinate sn-glycerol 3-phosphate. Ala140 is an NADPH binding site. Positions 191, 244, 254, 255, and 256 each coordinate sn-glycerol 3-phosphate. Residue Lys191 is the Proton acceptor of the active site. Arg255 contributes to the NADPH binding site. NADPH is bound by residues Val280 and Glu282.

It belongs to the NAD-dependent glycerol-3-phosphate dehydrogenase family.

The protein resides in the cytoplasm. It catalyses the reaction sn-glycerol 3-phosphate + NAD(+) = dihydroxyacetone phosphate + NADH + H(+). It carries out the reaction sn-glycerol 3-phosphate + NADP(+) = dihydroxyacetone phosphate + NADPH + H(+). It participates in membrane lipid metabolism; glycerophospholipid metabolism. Functionally, catalyzes the reduction of the glycolytic intermediate dihydroxyacetone phosphate (DHAP) to sn-glycerol 3-phosphate (G3P), the key precursor for phospholipid synthesis. The sequence is that of Glycerol-3-phosphate dehydrogenase [NAD(P)+] from Corynebacterium jeikeium (strain K411).